Here is a 304-residue protein sequence, read N- to C-terminus: Acetylglutamate kinase (304 aa).

Substrate contacts are provided by residues 70–71 (GG), arginine 92, and asparagine 196.

Belongs to the acetylglutamate kinase family. ArgB subfamily.

The protein localises to the cytoplasm. The enzyme catalyses N-acetyl-L-glutamate + ATP = N-acetyl-L-glutamyl 5-phosphate + ADP. It participates in amino-acid biosynthesis; L-arginine biosynthesis; N(2)-acetyl-L-ornithine from L-glutamate: step 2/4. Functionally, catalyzes the ATP-dependent phosphorylation of N-acetyl-L-glutamate. The chain is Acetylglutamate kinase from Methanococcoides burtonii (strain DSM 6242 / NBRC 107633 / OCM 468 / ACE-M).